The sequence spans 97 residues: Integration host factor subunit alpha (97 aa).

Residues phenylalanine 50–glutamate 71 form a disordered region.

This sequence belongs to the bacterial histone-like protein family. Heterodimer of an alpha and a beta chain.

Its function is as follows. This protein is one of the two subunits of integration host factor, a specific DNA-binding protein that functions in genetic recombination as well as in transcriptional and translational control. The polypeptide is Integration host factor subunit alpha (Legionella pneumophila (strain Paris)).